Reading from the N-terminus, the 108-residue chain is uncharacterized protein (108 aa).

This is an uncharacterized protein from Treponema pallidum (strain Nichols).